Here is a 210-residue protein sequence, read N- to C-terminus: Probable nicotinate-nucleotide adenylyltransferase (210 aa).

The protein belongs to the NadD family.

The enzyme catalyses nicotinate beta-D-ribonucleotide + ATP + H(+) = deamido-NAD(+) + diphosphate. It functions in the pathway cofactor biosynthesis; NAD(+) biosynthesis; deamido-NAD(+) from nicotinate D-ribonucleotide: step 1/1. Catalyzes the reversible adenylation of nicotinate mononucleotide (NaMN) to nicotinic acid adenine dinucleotide (NaAD). The chain is Probable nicotinate-nucleotide adenylyltransferase from Streptococcus pyogenes serotype M6 (strain ATCC BAA-946 / MGAS10394).